We begin with the raw amino-acid sequence, 192 residues long: Large ribosomal subunit protein bL9 (192 aa).

Positions 172-192 are disordered; that stretch reads DALRPEDFFDPEADGVDEDEA. The segment covering 179–192 has biased composition (acidic residues); it reads FFDPEADGVDEDEA.

It belongs to the bacterial ribosomal protein bL9 family.

In terms of biological role, binds to the 23S rRNA. This is Large ribosomal subunit protein bL9 from Rhizobium leguminosarum bv. trifolii (strain WSM2304).